The sequence spans 66 residues: Beta-toxin Chui4 (66 aa).

The LCN-type CS-alpha/beta domain maps to 1 to 66 (KEGYLVELGT…VWPLKNKTCK (66 aa)). 4 cysteine pairs are disulfide-bonded: C12/C65, C16/C41, C25/C46, and C29/C48.

Belongs to the long (4 C-C) scorpion toxin superfamily. Sodium channel inhibitor family. Beta subfamily. In terms of tissue distribution, expressed by the venom gland.

The protein localises to the secreted. In terms of biological role, beta toxins bind voltage-independently at site-4 of sodium channels (Nav) and shift the voltage of activation toward more negative potentials thereby affecting sodium channel activation and promoting spontaneous and repetitive firing. Acts on human sodium channel Nav1.6/SCN8A. Also able to weakly shift the activation curves of human Nav1.2/SCN2A and Nav1.4/SCN4A. In Centruroides huichol (Scorpion), this protein is Beta-toxin Chui4.